Reading from the N-terminus, the 463-residue chain is MTTETRSLYSQLPAIDRLLRDSSFLSLRDTYGHTRVVELLRQMLDEAREVIRGSQTLPAWCENWAQEVDARLTKEAQSALRPVINLTGTVLHTNLGRALQAEAAVEAVAQAMRSPVTLEYDLDDAGRGHRDRALAQLLCRITGAEDACIVNNNAAAVLLMLAATASGKEVVVSRGELVEIGGAFRIPDVMRQAGCTLHEVGTTNRTHANDYRQAVNENTALLMKVHTSNYSIQGFTKAIDEAELVALGKELDVPVVTDLGSGSLVDLSQYGLPKEPMPQELIAAGVSLVSFSGDKLLGGPQAGIIVGKKEMIARLQSHPLKRALRADKMTLAALEATLRLYLHPEALSEKLPTLRLLTRSAEVIQIQAQRLQAPLVAHYGAEFAVQVMPCLSQIGSGSLPVDRLPSAALTFTPHDGRGSHLESLAARWRELPVPVIGRIYDGRLWLDLRCLEDEQRFLEMLLK.

Lysine 295 carries the post-translational modification N6-(pyridoxal phosphate)lysine.

Belongs to the SelA family. In terms of assembly, homodecamer; pentamer of dimers. Binds only one seryl-tRNA(Sec) per dimer. Pyridoxal 5'-phosphate is required as a cofactor.

The protein resides in the cytoplasm. The enzyme catalyses L-seryl-tRNA(Sec) + selenophosphate + H(+) = L-selenocysteinyl-tRNA(Sec) + phosphate. The protein operates within aminoacyl-tRNA biosynthesis; selenocysteinyl-tRNA(Sec) biosynthesis; selenocysteinyl-tRNA(Sec) from L-seryl-tRNA(Sec) (bacterial route): step 1/1. In terms of biological role, converts seryl-tRNA(Sec) to selenocysteinyl-tRNA(Sec) required for selenoprotein biosynthesis. In Shigella flexneri, this protein is L-seryl-tRNA(Sec) selenium transferase.